We begin with the raw amino-acid sequence, 476 residues long: Siroheme synthase (476 aa).

The interval 1 to 203 is precorrin-2 dehydrogenase /sirohydrochlorin ferrochelatase; it reads MNYFPVFADL…RQIEAAKKEL (203 aa). Residues 22–23 and 43–44 contribute to the NAD(+) site; these read TI and QK. Phosphoserine is present on Ser-128. Residues 214 to 476 are uroporphyrinogen-III C-methyltransferase; sequence GSVSLVGAGP…LDSLRIERVA (263 aa). Pro-223 contributes to the S-adenosyl-L-methionine binding site. The active-site Proton acceptor is Asp-246. Lys-268 serves as the catalytic Proton donor. Residues 299-301, Val-304, 329-330, Met-381, and Gly-410 contribute to the S-adenosyl-L-methionine site; these read GGD and TA.

The protein in the N-terminal section; belongs to the precorrin-2 dehydrogenase / sirohydrochlorin ferrochelatase family. This sequence in the C-terminal section; belongs to the precorrin methyltransferase family.

It catalyses the reaction uroporphyrinogen III + 2 S-adenosyl-L-methionine = precorrin-2 + 2 S-adenosyl-L-homocysteine + H(+). It carries out the reaction precorrin-2 + NAD(+) = sirohydrochlorin + NADH + 2 H(+). The enzyme catalyses siroheme + 2 H(+) = sirohydrochlorin + Fe(2+). The protein operates within cofactor biosynthesis; adenosylcobalamin biosynthesis; precorrin-2 from uroporphyrinogen III: step 1/1. It participates in cofactor biosynthesis; adenosylcobalamin biosynthesis; sirohydrochlorin from precorrin-2: step 1/1. It functions in the pathway porphyrin-containing compound metabolism; siroheme biosynthesis; precorrin-2 from uroporphyrinogen III: step 1/1. Its pathway is porphyrin-containing compound metabolism; siroheme biosynthesis; siroheme from sirohydrochlorin: step 1/1. The protein operates within porphyrin-containing compound metabolism; siroheme biosynthesis; sirohydrochlorin from precorrin-2: step 1/1. Multifunctional enzyme that catalyzes the SAM-dependent methylations of uroporphyrinogen III at position C-2 and C-7 to form precorrin-2 via precorrin-1. Then it catalyzes the NAD-dependent ring dehydrogenation of precorrin-2 to yield sirohydrochlorin. Finally, it catalyzes the ferrochelation of sirohydrochlorin to yield siroheme. This is Siroheme synthase from Mannheimia succiniciproducens (strain KCTC 0769BP / MBEL55E).